A 321-amino-acid chain; its full sequence is Lipoyl synthase (321 aa).

[4Fe-4S] cluster contacts are provided by C68, C73, C79, C94, C98, C101, and S308. One can recognise a Radical SAM core domain in the interval 80 to 297 (FNHGTATFMI…KEIALELGFT (218 aa)).

The protein belongs to the radical SAM superfamily. Lipoyl synthase family. It depends on [4Fe-4S] cluster as a cofactor.

Its subcellular location is the cytoplasm. It catalyses the reaction [[Fe-S] cluster scaffold protein carrying a second [4Fe-4S](2+) cluster] + N(6)-octanoyl-L-lysyl-[protein] + 2 oxidized [2Fe-2S]-[ferredoxin] + 2 S-adenosyl-L-methionine + 4 H(+) = [[Fe-S] cluster scaffold protein] + N(6)-[(R)-dihydrolipoyl]-L-lysyl-[protein] + 4 Fe(3+) + 2 hydrogen sulfide + 2 5'-deoxyadenosine + 2 L-methionine + 2 reduced [2Fe-2S]-[ferredoxin]. It participates in protein modification; protein lipoylation via endogenous pathway; protein N(6)-(lipoyl)lysine from octanoyl-[acyl-carrier-protein]: step 2/2. In terms of biological role, catalyzes the radical-mediated insertion of two sulfur atoms into the C-6 and C-8 positions of the octanoyl moiety bound to the lipoyl domains of lipoate-dependent enzymes, thereby converting the octanoylated domains into lipoylated derivatives. The protein is Lipoyl synthase of Vibrio cholerae serotype O1 (strain ATCC 39541 / Classical Ogawa 395 / O395).